Here is a 650-residue protein sequence, read N- to C-terminus: Solute carrier family 23 member 2 (650 aa).

Over residues 1–20 the composition is skewed to polar residues; that stretch reads MMGIGKNTTSKSMEAGSSTE. A disordered region spans residues 1-21; the sequence is MMGIGKNTTSKSMEAGSSTEG. The Cytoplasmic portion of the chain corresponds to 9–110; it reads TSKSMEAGSS…LCIFLGLQHY (102 aa). Serine 70 is modified (phosphoserine). Threonine 75 is subject to Phosphothreonine. At serine 78 the chain carries Phosphoserine. The residue at position 79 (threonine 79) is a Phosphothreonine. Serine 81 is subject to Phosphoserine. Residues 111-131 form a helical membrane-spanning segment; the sequence is LTCFSGTIAVPFLLADAMCVG. Residues 132-139 are Extracellular-facing; it reads YDQWATSQ. Residues 140 to 160 form a helical membrane-spanning segment; that stretch reads LIGTIFFCVGITTLLQTTFGC. Position 161 (arginine 161) is a topological domain, cytoplasmic. The chain crosses the membrane as a helical span at residues 162–182; it reads LPLFQASAFAFLAPARAILSL. Topologically, residues 183–218 are extracellular; sequence DKWKCNTTDVSVANGTAELLHTEHIWYPRIREIQGA. 2 N-linked (GlcNAc...) asparagine glycosylation sites follow: asparagine 188 and asparagine 196. The chain crosses the membrane as a helical span at residues 219–239; that stretch reads IIMSSLIEVVIGLLGLPGALL. Topologically, residues 240 to 266 are cytoplasmic; it reads KYIGPLTITPTVALIGLSGFQAAGERA. The chain crosses the membrane as a helical span at residues 267–284; sequence GKHWGIAMLTIFLVLLFS. The Extracellular segment spans residues 285-288; that stretch reads QYAR. The helical intramembrane region spans 289 to 302; sequence NVKFPLPIYKSKKG. Residues 303 to 309 lie on the Extracellular side of the membrane; that stretch reads WTAYKLQ. The helical transmembrane segment at 310–330 threads the bilayer; sequence LFKMFPIILAILVSWLLCFIF. At 331-371 the chain is on the cytoplasmic side; sequence TVTDVFPPDSTKYGFYARTDARQGVLLVAPWFKVPYPFQWG. A helical membrane pass occupies residues 372 to 392; that stretch reads LPTVSAAGVIGMLSAVVASII. The Extracellular portion of the chain corresponds to 393–417; it reads ESIGDYYACARLSCAPPPPIHAINR. The helical transmembrane segment at 418 to 438 threads the bilayer; that stretch reads GIFVEGLSCVLDGIFGTGNGS. The Cytoplasmic segment spans residues 439-461; the sequence is TSSSPNIGVLGITKVGSRRVIQC. A helical transmembrane segment spans residues 462–482; it reads GAALMLALGMIGKFSALFASL. Residues 483–485 are Extracellular-facing; sequence PDP. The chain crosses the membrane as a helical span at residues 486–506; the sequence is VLGALFCTLFGMITAVGLSNL. The Cytoplasmic portion of the chain corresponds to 507–516; the sequence is QFIDLNSSRN. Residues 517–537 traverse the membrane as a helical segment; sequence LFVLGFSIFFGLVLPSYLRQN. Residues 538–547 are Extracellular-facing; that stretch reads PLVTGITGID. The helical transmembrane segment at 548 to 568 threads the bilayer; it reads QVLNVLLTTAMFVGGCVAFIL. Over 569–650 the chain is Cytoplasmic; it reads DNTIPGTPEE…SSDEDSQATG (82 aa). Phosphothreonine is present on threonine 649.

Belongs to the nucleobase:cation symporter-2 (NCS2) (TC 2.A.40) family. As to quaternary structure, interacts with CLSTN3. In terms of processing, phosphorylated. Ubiquitous.

It localises to the cell membrane. The enzyme catalyses L-ascorbate(out) + 2 Na(+)(out) = L-ascorbate(in) + 2 Na(+)(in). Sodium/ascorbate cotransporter. Mediates electrogenic uptake of vitamin C, with a stoichiometry of 2 Na(+) for each ascorbate. The sequence is that of Solute carrier family 23 member 2 (SLC23A2) from Homo sapiens (Human).